Consider the following 623-residue polypeptide: Immunity-related GTPase family Q protein (623 aa).

Cys-152 and Cys-158 are disulfide-bonded. Residues 155-180 (SDGCEELERLRAALQSQAEALRRLLP) are a coiled coil. An LIR 1 motif is present at residues 186–189 (FEVL). Thr-203 carries the phosphothreonine modification. In terms of domain architecture, IRG-type G spans 223-449 (ARLDLAVAGK…PGLCEWLRRA (227 aa)). A disordered region spans residues 334–393 (EGEDPECLGEGKMENPKGESLKNAGGGGLENALSKGREKCSAGSQKAGSGEGPGKAGSEG). The segment covering 342–353 (GEGKMENPKGES) has biased composition (basic and acidic residues). Positions 421-424 (WEVL) match the LIR 2 motif.

Belongs to the TRAFAC class dynamin-like GTPase superfamily. IRG family. In terms of assembly, interacts (via LIR motif 1) with GABARAPL2. Interacts (via LIR motif 2) with MAP1LC3B/LC3B.

Its subcellular location is the lysosome. The protein resides in the cytoplasmic vesicle. It localises to the autophagosome. Its function is as follows. Autophagy receptor that specifically promotes clearance of misfolded MHC class I molecules by targeting them to the lysosome for degradation. Acts as a molecular adapter that specifically recognizes and binds (1) misfolded MHC class I molecules following their ubiquitination, as well as (2) autophagy-related proteins, promoting the recruitment of misfolded MHC class I molecules to autophagy machinery for degradation. Degradation of misfolded MHC class I molecules is essential to prevent accumulation of defective MHC class I complexes at the surface of CD8(+) T-cells and prevent a stronger T-cell-mediated response. In contrast to other members of the family, does not show GTPase activity. The polypeptide is Immunity-related GTPase family Q protein (Homo sapiens (Human)).